The primary structure comprises 222 residues: Apoptosis regulator OPG045 (222 aa).

Belongs to the orthopoxvirus OPG045 family. In terms of assembly, homodimer. Interacts with host pro-apoptotic protein BCL2L11 (via BH3 domain). Interacts with host NLRP1. Interacts with host BAK.

The protein resides in the host mitochondrion outer membrane. It is found in the host cytoplasm. Its function is as follows. Plays a role in evading host innate immune response by inhibiting host inflammasome activation. Interacts with and inhibits NLR-mediated interleukin-1 beta/IL1B production in infected cells. At the host mitochondria outer membrane, interacts with the BH3 domain of host BAK and prevents BAK from binding active BAX. In turn, host apoptosis is inhibited. In Homo sapiens (Human), this protein is Apoptosis regulator OPG045 (OPG045).